Here is a 432-residue protein sequence, read N- to C-terminus: Ciliated left-right organizer protein containing ZP-N domains homolog (432 aa).

In terms of tissue distribution, expressed specifically by cells of the ciliated left-right organizer.

This chain is Ciliated left-right organizer protein containing ZP-N domains homolog (ciroz), found in Danio rerio (Zebrafish).